The chain runs to 186 residues: ATP synthase subunit delta (186 aa).

Belongs to the ATPase delta chain family. F-type ATPases have 2 components, F(1) - the catalytic core - and F(0) - the membrane proton channel. F(1) has five subunits: alpha(3), beta(3), gamma(1), delta(1), epsilon(1). CF(0) has four main subunits: a(1), b(1), b'(1) and c(10-14). The alpha and beta chains form an alternating ring which encloses part of the gamma chain. F(1) is attached to F(0) by a central stalk formed by the gamma and epsilon chains, while a peripheral stalk is formed by the delta, b and b' chains.

It localises to the cell inner membrane. F(1)F(0) ATP synthase produces ATP from ADP in the presence of a proton or sodium gradient. F-type ATPases consist of two structural domains, F(1) containing the extramembraneous catalytic core and F(0) containing the membrane proton channel, linked together by a central stalk and a peripheral stalk. During catalysis, ATP synthesis in the catalytic domain of F(1) is coupled via a rotary mechanism of the central stalk subunits to proton translocation. Functionally, this protein is part of the stalk that links CF(0) to CF(1). It either transmits conformational changes from CF(0) to CF(1) or is implicated in proton conduction. The protein is ATP synthase subunit delta of Rhodospirillum centenum (strain ATCC 51521 / SW).